The primary structure comprises 326 residues: Ribose-phosphate pyrophosphokinase 4 (326 aa).

Residues D140, H142, H151, and D155 each coordinate Mg(2+).

The protein belongs to the ribose-phosphate pyrophosphokinase family.

The protein resides in the cytoplasm. It catalyses the reaction D-ribose 5-phosphate + ATP = 5-phospho-alpha-D-ribose 1-diphosphate + AMP + H(+). It participates in metabolic intermediate biosynthesis; 5-phospho-alpha-D-ribose 1-diphosphate biosynthesis; 5-phospho-alpha-D-ribose 1-diphosphate from D-ribose 5-phosphate (route I): step 1/1. In terms of biological role, 5-phosphoribose 1-diphosphate synthase involved in nucleotide, histidine, and tryptophan biosynthesis. Active in heteromultimeric complexes with other 5-phosphoribose 1-diphosphate synthases (PRS2, PRS3, PRS4 and PRS5). The sequence is that of Ribose-phosphate pyrophosphokinase 4 (PRS4) from Saccharomyces cerevisiae (strain ATCC 204508 / S288c) (Baker's yeast).